We begin with the raw amino-acid sequence, 261 residues long: Protein FAM78B (261 aa).

It belongs to the FAM78 family.

This is Protein FAM78B (FAM78B) from Homo sapiens (Human).